The following is a 215-amino-acid chain: 3-isopropylmalate dehydratase small subunit (215 aa).

It belongs to the LeuD family. LeuD type 1 subfamily. As to quaternary structure, heterodimer of LeuC and LeuD.

The catalysed reaction is (2R,3S)-3-isopropylmalate = (2S)-2-isopropylmalate. It functions in the pathway amino-acid biosynthesis; L-leucine biosynthesis; L-leucine from 3-methyl-2-oxobutanoate: step 2/4. Its function is as follows. Catalyzes the isomerization between 2-isopropylmalate and 3-isopropylmalate, via the formation of 2-isopropylmaleate. In Xanthomonas oryzae pv. oryzae (strain MAFF 311018), this protein is 3-isopropylmalate dehydratase small subunit.